A 117-amino-acid chain; its full sequence is Protein RALF-like 27 (117 aa).

Positions 1–27 (MTKTFFSFSFFFTSSLLLLLAATSATA) are cleaved as a signal peptide. The propeptide at 28-71 (STGNVTSGLRYDGCAPGDTVGECITATVEEEDEEGVEAVVRRIL) is removed in mature form. N-linked (GlcNAc...) asparagine glycosylation occurs at N31. Cystine bridges form between C88-C96 and C107-C113.

The protein belongs to the plant rapid alkalinization factor (RALF) family.

Its subcellular location is the secreted. Functionally, cell signaling peptide that may regulate plant stress, growth, and development. Mediates a rapid alkalinization of extracellular space by mediating a transient increase in the cytoplasmic Ca(2+) concentration leading to a calcium-dependent signaling events through a cell surface receptor and a concomitant activation of some intracellular mitogen-activated protein kinases. In Arabidopsis thaliana (Mouse-ear cress), this protein is Protein RALF-like 27 (RALFL27).